The following is a 3901-amino-acid chain: Nonribosomal peptide synthetase opaA (3901 aa).

The interval 248–641 (HNAQHHPSVV…HRKDNQIKIR (394 aa)) is adenylation 1. Positions 780 to 854 (LPVTANEIVV…DMATRLTRIK (75 aa)) constitute a Carrier 1 domain. Position 815 is an O-(pantetheine 4'-phosphoryl)serine (Ser-815). Residues 891–1164 (DAYPCSALQE…IATVPIRINL (274 aa)) are condensation 1. Residues 1328 to 1725 (QSHAQKTPKS…GRIGNQVKLR (398 aa)) are adenylation 2. In terms of domain architecture, Carrier 2 spans 1858–1936 (RTPLDTERDL…QIAAQAATRA (79 aa)). Residue Ser-1895 is modified to O-(pantetheine 4'-phosphoryl)serine. Residues 1953-2261 (KLTPIQQLFF…KDARRRLTRN (309 aa)) form an epimerase region. Positions 2403 to 2826 (ENLYPCAPIQ…LVSTDHKRLL (424 aa)) are condensation 2. Positions 2846 to 3243 (QQHVRETPDA…GRKDSQIKIR (398 aa)) are adenylation 3. A Carrier 3 domain is found at 3375–3451 (LPSTAGEQLL…ALAARSRSKD (77 aa)). At Ser-3412 the chain carries O-(pantetheine 4'-phosphoryl)serine. The interval 3509–3837 (HHFSFAVEGK…EDLKTHFTLN (329 aa)) is condensation 3.

It belongs to the NRP synthetase family.

In terms of biological role, nonribosomal peptide synthetase; part of the gene cluster that mediates the biosynthesis of oxepinamides, derivatives of anthranilyl-containing tripeptides that share an oxepin ring and a fused pyrimidinone moiety. The nonribosomal peptide synthetase (NRPS) opaA assembles the quinazolinone core with D-Phe incorporation. The first adenylation domain (A1) of opaA loads and activates anthranilic acid whereas the second A domain (A2) is for activating of L-Phe, which is then converted to D-form by the E domain. The third A domain (A3) is responsible for L-Ile activation and the terminal condensation domain C3 for cyclization and releasing the NRPS product protuboxepin K. The cytochrome P450 monooxygenase opaB then catalyzes alone the oxepin ring formation to convert protuboxepin K into protuboxepin A. The flavoenzyme opaC installs subsequently one hydroxyl group at the oxepin ring, accompanied by double bond migration, to form 15-epi-oxepinamide E. The epimerase opaE changes the D-Phe residue back to L-form, leading to oxepinamide E, which is further methylated at the hydroxyl group at C-12 by the O-methyltransferase OpaF to yield oxepinamide F. In Aspergillus ustus, this protein is Nonribosomal peptide synthetase opaA.